The chain runs to 363 residues: Cobalt-precorrin-5B C(1)-methyltransferase (363 aa).

The protein belongs to the CbiD family.

The catalysed reaction is Co-precorrin-5B + S-adenosyl-L-methionine = Co-precorrin-6A + S-adenosyl-L-homocysteine. It functions in the pathway cofactor biosynthesis; adenosylcobalamin biosynthesis; cob(II)yrinate a,c-diamide from sirohydrochlorin (anaerobic route): step 6/10. Catalyzes the methylation of C-1 in cobalt-precorrin-5B to form cobalt-precorrin-6A. In Burkholderia mallei (strain ATCC 23344), this protein is Cobalt-precorrin-5B C(1)-methyltransferase.